The following is a 542-amino-acid chain: CTP synthase (542 aa).

The segment at 1–265 (MARYVFITGG…DSEVLSAFGI (265 aa)) is amidoligase domain. S13 is a binding site for CTP. Position 13 (S13) interacts with UTP. 14 to 19 (SLGKGI) contacts ATP. Y54 contributes to the L-glutamine binding site. D71 serves as a coordination point for ATP. Mg(2+) is bound by residues D71 and E139. CTP is bound by residues 146–148 (DIE), 186–191 (KTKPTQ), and K222. UTP contacts are provided by residues 186 to 191 (KTKPTQ) and K222. The 251-residue stretch at 291 to 541 (TIAIVGKYTG…IEAAIEQSRL (251 aa)) folds into the Glutamine amidotransferase type-1 domain. G353 lines the L-glutamine pocket. C380 functions as the Nucleophile; for glutamine hydrolysis in the catalytic mechanism. L-glutamine is bound by residues 381 to 384 (FGMQ), E404, and R469. Catalysis depends on residues H514 and E516.

It belongs to the CTP synthase family. As to quaternary structure, homotetramer.

It carries out the reaction UTP + L-glutamine + ATP + H2O = CTP + L-glutamate + ADP + phosphate + 2 H(+). The enzyme catalyses L-glutamine + H2O = L-glutamate + NH4(+). The catalysed reaction is UTP + NH4(+) + ATP = CTP + ADP + phosphate + 2 H(+). Its pathway is pyrimidine metabolism; CTP biosynthesis via de novo pathway; CTP from UDP: step 2/2. Allosterically activated by GTP, when glutamine is the substrate; GTP has no effect on the reaction when ammonia is the substrate. The allosteric effector GTP functions by stabilizing the protein conformation that binds the tetrahedral intermediate(s) formed during glutamine hydrolysis. Inhibited by the product CTP, via allosteric rather than competitive inhibition. In terms of biological role, catalyzes the ATP-dependent amination of UTP to CTP with either L-glutamine or ammonia as the source of nitrogen. Regulates intracellular CTP levels through interactions with the four ribonucleotide triphosphates. The chain is CTP synthase from Brucella anthropi (strain ATCC 49188 / DSM 6882 / CCUG 24695 / JCM 21032 / LMG 3331 / NBRC 15819 / NCTC 12168 / Alc 37) (Ochrobactrum anthropi).